Consider the following 338-residue polypeptide: Fructose-1,6-bisphosphatase class 1 (338 aa).

The Mg(2+) site is built by Glu90, Asp112, Leu114, and Asp115. Residues 115 to 118 (DGSS), Asn207, and Lys273 each bind substrate. Glu279 is a binding site for Mg(2+).

It belongs to the FBPase class 1 family. Homotetramer. The cofactor is Mg(2+).

Its subcellular location is the cytoplasm. It catalyses the reaction beta-D-fructose 1,6-bisphosphate + H2O = beta-D-fructose 6-phosphate + phosphate. The protein operates within carbohydrate biosynthesis; gluconeogenesis. This Stenotrophomonas maltophilia (strain R551-3) protein is Fructose-1,6-bisphosphatase class 1.